A 259-amino-acid chain; its full sequence is Thiazole synthase (259 aa).

Lysine 95 serves as the catalytic Schiff-base intermediate with DXP. 1-deoxy-D-xylulose 5-phosphate-binding positions include glycine 156, 182–183 (AG), and 204–205 (NT).

This sequence belongs to the ThiG family. Homotetramer. Forms heterodimers with either ThiH or ThiS.

The protein localises to the cytoplasm. It catalyses the reaction [ThiS sulfur-carrier protein]-C-terminal-Gly-aminoethanethioate + 2-iminoacetate + 1-deoxy-D-xylulose 5-phosphate = [ThiS sulfur-carrier protein]-C-terminal Gly-Gly + 2-[(2R,5Z)-2-carboxy-4-methylthiazol-5(2H)-ylidene]ethyl phosphate + 2 H2O + H(+). The protein operates within cofactor biosynthesis; thiamine diphosphate biosynthesis. Its function is as follows. Catalyzes the rearrangement of 1-deoxy-D-xylulose 5-phosphate (DXP) to produce the thiazole phosphate moiety of thiamine. Sulfur is provided by the thiocarboxylate moiety of the carrier protein ThiS. In vitro, sulfur can be provided by H(2)S. In Proteus mirabilis (strain HI4320), this protein is Thiazole synthase.